An 873-amino-acid chain; its full sequence is Tyrosine-protein kinase transforming protein Fps (873 aa).

Residues 1–46 form a disordered region; sequence ASGQLHRPQPQEHTSTSAAAGTWRLTQASESRHRLPHCSAAPSHQD. Residues 11–29 show a composition bias toward polar residues; it reads QEHTSTSAAAGTWRLTQAS. Residues 50–313 form the F-BAR domain; sequence MGFGPELWCP…AVEMIDPATE (264 aa). Positions 445–471 are disordered; it reads GSEEPPPALPLQEDRQSARSTDQERSG. The span at 456 to 469 shows a compositional bias: basic and acidic residues; the sequence is QEDRQSARSTDQER. Residues 511 to 600 form the SH2 domain; it reads WYHGAIPRSE…KSGIVLTRAV (90 aa). Residues 612-865 form the Protein kinase domain; it reads VLLGERIGRG…PSFGAVHQDL (254 aa). Residues 618–626 and Lys641 each bind ATP; that span reads IGRGNFGEV. The active-site Proton acceptor is the Asp734. Tyr764 carries the phosphotyrosine; by autocatalysis modification.

Belongs to the protein kinase superfamily. Tyr protein kinase family. Fes/fps subfamily.

It carries out the reaction L-tyrosyl-[protein] + ATP = O-phospho-L-tyrosyl-[protein] + ADP + H(+). This chain is Tyrosine-protein kinase transforming protein Fps (V-FPS), found in Gallus gallus (Chicken).